The chain runs to 196 residues: Small heat shock protein C3 (196 aa).

In terms of domain architecture, sHSP spans 88 to 196; the sequence is SAYSSSAIRT…EKDAKEIPIQ (109 aa).

The protein belongs to the small heat shock protein (HSP20) family.

In Rickettsia felis (strain ATCC VR-1525 / URRWXCal2) (Rickettsia azadi), this protein is Small heat shock protein C3 (hspc3-1).